The following is a 330-amino-acid chain: D-lactate dehydrogenase (330 aa).

NAD(+) is bound by residues 156 to 157 (RI), Asp-176, 206 to 207 (VP), 233 to 235 (AAR), and Asp-259. Arg-235 is a catalytic residue. Glu-264 is an active-site residue. His-296 functions as the Proton donor in the catalytic mechanism.

The protein belongs to the D-isomer specific 2-hydroxyacid dehydrogenase family.

The enzyme catalyses (R)-lactate + NAD(+) = pyruvate + NADH + H(+). The sequence is that of D-lactate dehydrogenase (ldhD) from Staphylococcus aureus (strain Mu50 / ATCC 700699).